Here is a 901-residue protein sequence, read N- to C-terminus: Protein translocase subunit SecA 1 (901 aa).

ATP contacts are provided by residues Gln-87, 105 to 109 (GEGKT), and Asp-500. The disordered stretch occupies residues 847 to 901 (LNHPESGSWGGEGEGPSSEGAPHLPFKRDGEKVGRNQACPCGSGKKYKQCCGKLS). Residues Cys-885, Cys-887, Cys-896, and Cys-897 each contribute to the Zn(2+) site.

The protein belongs to the SecA family. As to quaternary structure, monomer and homodimer. Part of the essential Sec protein translocation apparatus which comprises SecA, SecYEG and auxiliary proteins SecDF-YajC and YidC. The cofactor is Zn(2+).

It localises to the cell inner membrane. Its subcellular location is the cytoplasm. The catalysed reaction is ATP + H2O + cellular proteinSide 1 = ADP + phosphate + cellular proteinSide 2.. Functionally, part of the Sec protein translocase complex. Interacts with the SecYEG preprotein conducting channel. Has a central role in coupling the hydrolysis of ATP to the transfer of proteins into and across the cell membrane, serving both as a receptor for the preprotein-SecB complex and as an ATP-driven molecular motor driving the stepwise translocation of polypeptide chains across the membrane. In Magnetococcus marinus (strain ATCC BAA-1437 / JCM 17883 / MC-1), this protein is Protein translocase subunit SecA 1.